Here is a 343-residue protein sequence, read N- to C-terminus: Follistatin (343 aa).

The signal sequence occupies residues 1–28; it reads MLNQRIHPGMLVLLMFLYHFMEDHTAQA. The 74-residue stretch at 29-102 folds into the TB domain; it reads GNCWLRQARN…TCENVDCGPG (74 aa). Cystine bridges form between Cys31/Cys54, Cys41/Cys87, Cys55/Cys90, Cys94/Cys105, Cys99/Cys115, Cys117/Cys149, Cys121/Cys142, and Cys131/Cys163. The 24-residue stretch at 93-116 folds into the Follistatin-like 1 domain; it reads TCENVDCGPGKKCKMNKKNKPRCV. 3 Kazal-like domains span residues 99 to 165, 185 to 240, and 263 to 317; these read CGPG…KCKK, NAYC…KCIK, and RGRC…SCNS. Asn123 carries N-linked (GlcNAc...) asparagine glycosylation. The Follistatin-like 2 domain occupies 166 to 189; sequence TCRDVLCPGSSTCVVDQTNNAYCV. 3 disulfides stabilise this stretch: Cys191–Cys224, Cys195–Cys217, and Cys206–Cys238. Residues 243–267 form the Follistatin-like 3 domain; sequence SCEDIQCSAGKKCLWDFKVGRGRCA. Cystine bridges form between Cys269/Cys301, Cys273/Cys294, and Cys283/Cys315. N-linked (GlcNAc...) asparagine glycosylation is present at Asn287. A disordered region spans residues 315–343; it reads CNSINEDPEEEEEDEDQDYSFPISSILEW. The span at 320–332 shows a compositional bias: acidic residues; sequence EDPEEEEEDEDQD.

As to quaternary structure, monomer. Ciliary ganglion neurons. Levels are higher in the iris than the choroid.

It localises to the secreted. Functionally, binds directly to activin and functions as an activin antagonist. Inhibits activin A signaling in the iris and regulates somatostatin phenotype in ciliary ganglion neurons. Specific inhibitor of the biosynthesis and secretion of pituitary follicle stimulating hormone (FSH). In Gallus gallus (Chicken), this protein is Follistatin (FST).